A 171-amino-acid polypeptide reads, in one-letter code: Co-chaperone protein HscB homolog (171 aa).

The 68-residue stretch at 2–69 (NHFELFDLPV…DSRAAYLLSL (68 aa)) folds into the J domain.

Belongs to the HscB family. As to quaternary structure, interacts with HscA and stimulates its ATPase activity.

Its function is as follows. Co-chaperone involved in the maturation of iron-sulfur cluster-containing proteins. Seems to help targeting proteins to be folded toward HscA. The protein is Co-chaperone protein HscB homolog of Acinetobacter baylyi (strain ATCC 33305 / BD413 / ADP1).